A 283-amino-acid chain; its full sequence is CUE domain-containing protein 2 (283 aa).

Positions 87–109 (LSGARNKENVQPQSSEVQGQVSI) are enriched in polar residues. The interval 87-139 (LSGARNKENVQPQSSEVQGQVSISPEPLQRPEKLKEETMSSAGDTQDEAAGPE) is disordered. Position 110 is a phosphoserine (S110). Residues 115 to 124 (QRPEKLKEET) show a composition bias toward basic and acidic residues. The region spanning 141-184 (ELLPGVDVLLEVFPTCSVEQAQWVLAKARGDLEEAVQMLVEGKQ) is the CUE domain.

Belongs to the CUEDC2 family. In terms of assembly, interacts with PGR and ESR1.

It is found in the cytoplasm. The protein resides in the nucleus. Controls PGR and ESR1 protein levels through their targeting for ubiquitination and subsequent proteasomal degradation. This is CUE domain-containing protein 2 (CUEDC2) from Bos taurus (Bovine).